Here is an 868-residue protein sequence, read N- to C-terminus: Pentatricopeptide repeat-containing protein At2g27610 (868 aa).

18 PPR repeats span residues 57 to 91 (DRESYISLLFGFSRDGRTQEAKRLFLNIHRLGMEM), 92 to 126 (DCSIFSSVLKVSATLCDELFGRQLHCQCIKFGFLD), 127 to 157 (DVSVGTSLVDTYMKGSNFKDGRKVFDEMKER), 158 to 192 (NVVTWTTLISGYARNSMNDEVLTLFMRMQNEGTQP), 193 to 227 (NSFTFAAALGVLAEEGVGGRGLQVHTVVVKNGLDK), 228 to 258 (TIPVSNSLINLYLKCGNVRKARILFDKTEVK), 259 to 293 (SVVTWNSMISGYAANGLDLEALGMFYSMRLNYVRL), 294 to 328 (SESSFASVIKLCANLKELRFTEQLHCSVVKYGFLF), 329 to 359 (DQNIRTALMVAYSKCTAMLDALRLFKEIGCV), 361 to 395 (NVVSWTAMISGFLQNDGKEEAVDLFSEMKRKGVRP), 396 to 426 (NEFTYSVILTALPVISPSEVHAQVVKTNYER), 427 to 457 (SSTVGTALLDAYVKLGKVEEAAKVFSGIDDK), 458 to 492 (DIVAWSAMLAGYAQTGETEAAIKMFGELTKGGIKP), 493 to 528 (NEFTFSSILNVCAATNASMGQGKQFHGFAIKSRLDS), 529 to 559 (SLCVSSALLTMYAKKGNIESAEEVFKRQREK), 560 to 594 (DLVSWNSMISGYAQHGQAMKALDVFKEMKKRKVKM), 595 to 625 (DGVTFIGVFAACTHAGLVEEGEKYFDIMVRD), and 631 to 661 (TKEHNSCMVDLYSRAGQLEKAMKVIENMPNP). A type E motif region spans residues 666–741 (IWRTILAACR…EPGYSWIEVK (76 aa)). Residues 742-772 (NKTYSFLAGDRSHPLKDQIYMKLEDLSTRLK) form a type E(+) motif region. The segment at 773–868 (DLGYEPDTSY…DGVCSCGDFW (96 aa)) is type DYW motif.

Belongs to the PPR family. PCMP-H subfamily.

This is Pentatricopeptide repeat-containing protein At2g27610 (PCMP-H60) from Arabidopsis thaliana (Mouse-ear cress).